A 438-amino-acid polypeptide reads, in one-letter code: MLATLARVAALRRTCLFSGRGGGRGLWTGRPQSDMNNIKPLEGVKILDLTRVLAGPFATMNLGDLGAEVIKVERPGAGDDTRTWGPPFVGTESTYYLSVNRNKKSIAVNIKDPKGVKIIKELAAVCDVFVENYVPGKLSAMGLGYEDIDEIAPHIIYCSITGYGQTGPISQRAGYDAVASAVSGLMHITGPENGDPVRPGVAMTDLATGLYAYGAIMAGLIQKYKTGKGLFIDCNLLSSQVACLSHIAANYLIGQKEAKRWGTAHGSIVPYQAFKTKDGYIVVGAGNNQQFATVCKILDLPELIDNSKYKTNHLRVHNRKELIKILSERFEEELTSKWLYLFEGSGVPYGPINNMKNVFAEPQVLHNGLVMEMEHPTVGKISVPGPAVRYSKFKMSEARPPPLLGQHTTHILKEVLRYDDRAIGELLSAGVVDQHETH.

The N-terminal 31 residues, 1-31, are a transit peptide targeting the mitochondrion; that stretch reads MLATLARVAALRRTCLFSGRGGGRGLWTGRP. The active-site Nucleophile is the Asp-205. Lys-394 carries the post-translational modification N6-acetyllysine.

This sequence belongs to the CoA-transferase III family. As to expression, highly expressed in kidney. Intermediate expression in liver, skeletal muscle and pancreas. Little to no expression detected in other tissues examined.

It localises to the mitochondrion. The catalysed reaction is glutarate + succinyl-CoA = glutaryl-CoA + succinate. The enzyme catalyses 3-hydroxy-3-methylglutarate + succinyl-CoA = (3S)-3-hydroxy-3-methylglutaryl-CoA + succinate. It catalyses the reaction 3-hydroxy-3-methylglutarate + glutaryl-CoA = (3S)-3-hydroxy-3-methylglutaryl-CoA + glutarate. It carries out the reaction hexanedioate + glutaryl-CoA = hexanedioyl-CoA + glutarate. The catalysed reaction is itaconate + glutaryl-CoA = itaconyl-CoA + glutarate. The enzyme catalyses itaconate + succinyl-CoA = itaconyl-CoA + succinate. Its activity is regulated as follows. Inhibited by valsartan and losartan carboxylate. Its function is as follows. Coenzyme A (CoA) transferase that reversibly catalyzes the transfer of a CoA moiety from a dicarboxyl-CoA to a dicarboxylate in a metabolite recycling process. Displays preference for succinyl-CoA and glutarate-CoA as dicarboxyl-CoA donors and glutarate, succinate, adipate/hexanedioate, itaconate and 3-hydroxy-3-methylglutarate as dicarboxylate acceptors. Acts on intermediates or end products of lysine and tryptophan degradation pathway, in particular catalyzes succinyl-CoA-dependent reesterification of free glutarate into glutaryl-CoA to prevent renal excretion of glutarate. Upon inflammation, may convert macrophage-derived itaconate to itaconyl-CoA in erythroid precursors where it negatively regulates the TCA cycle and heme synthesis to limit erythroid differentiation in the context of stress erythropoiesis. The sequence is that of Succinyl-CoA:glutarate CoA-transferase from Homo sapiens (Human).